The following is a 213-amino-acid chain: Pyridoxine/pyridoxamine 5'-phosphate oxidase (213 aa).

Substrate contacts are provided by residues 8–11 (RKNY) and K66. Residues 61 to 66 (RIVLIK), 76 to 77 (FT), R82, K83, and Q105 each bind FMN. The substrate site is built by Y123, R127, and S131. FMN is bound by residues 140-141 (QS) and W184. Residue 190–192 (RLH) coordinates substrate. An FMN-binding site is contributed by R194.

This sequence belongs to the pyridoxamine 5'-phosphate oxidase family. In terms of assembly, homodimer. FMN is required as a cofactor.

It catalyses the reaction pyridoxamine 5'-phosphate + O2 + H2O = pyridoxal 5'-phosphate + H2O2 + NH4(+). The catalysed reaction is pyridoxine 5'-phosphate + O2 = pyridoxal 5'-phosphate + H2O2. It participates in cofactor metabolism; pyridoxal 5'-phosphate salvage; pyridoxal 5'-phosphate from pyridoxamine 5'-phosphate: step 1/1. Its pathway is cofactor metabolism; pyridoxal 5'-phosphate salvage; pyridoxal 5'-phosphate from pyridoxine 5'-phosphate: step 1/1. In terms of biological role, catalyzes the oxidation of either pyridoxine 5'-phosphate (PNP) or pyridoxamine 5'-phosphate (PMP) into pyridoxal 5'-phosphate (PLP). The polypeptide is Pyridoxine/pyridoxamine 5'-phosphate oxidase (Paraburkholderia xenovorans (strain LB400)).